The following is an 82-amino-acid chain: RNA-binding protein Hfq (82 aa).

The 61-residue stretch at 10–70 folds into the Sm domain; the sequence is DTFLNHVRKN…ISTIMPAQPV (61 aa).

The protein belongs to the Hfq family. In terms of assembly, homohexamer.

RNA chaperone that binds small regulatory RNA (sRNAs) and mRNAs to facilitate mRNA translational regulation in response to envelope stress, environmental stress and changes in metabolite concentrations. Also binds with high specificity to tRNAs. In Parvibaculum lavamentivorans (strain DS-1 / DSM 13023 / NCIMB 13966), this protein is RNA-binding protein Hfq.